Consider the following 63-residue polypeptide: ORF6 protein (63 aa).

It belongs to the coronaviruses accessory protein 6 family.

It is found in the host endoplasmic reticulum membrane. It localises to the host Golgi apparatus membrane. Its function is as follows. Could be a determinant of virus virulence. Seems to stimulate cellular DNA synthesis in vitro. This is ORF6 protein from Bat coronavirus HKU3 (BtCoV).